Here is a 377-residue protein sequence, read N- to C-terminus: Anhydro-N-acetylmuramic acid kinase (377 aa).

Residue 18-25 participates in ATP binding; sequence GTSADGID.

This sequence belongs to the anhydro-N-acetylmuramic acid kinase family.

The enzyme catalyses 1,6-anhydro-N-acetyl-beta-muramate + ATP + H2O = N-acetyl-D-muramate 6-phosphate + ADP + H(+). It functions in the pathway amino-sugar metabolism; 1,6-anhydro-N-acetylmuramate degradation. Its pathway is cell wall biogenesis; peptidoglycan recycling. Catalyzes the specific phosphorylation of 1,6-anhydro-N-acetylmuramic acid (anhMurNAc) with the simultaneous cleavage of the 1,6-anhydro ring, generating MurNAc-6-P. Is required for the utilization of anhMurNAc either imported from the medium or derived from its own cell wall murein, and thus plays a role in cell wall recycling. This chain is Anhydro-N-acetylmuramic acid kinase, found in Xanthomonas campestris pv. campestris (strain 8004).